A 299-amino-acid chain; its full sequence is Protein sprouty homolog 4 (299 aa).

Residue Met-1 is modified to N-acetylmethionine. Disordered stretches follow at residues 55–79 (NPSL…PTPA) and 92–126 (FSGR…QASP). Positions 92 to 107 (FSGRPSSVSSSSSTSS) are enriched in low complexity. At Ser-125 the chain carries Phosphoserine. One can recognise an SPR domain in the interval 166 to 273 (KCKECASPRT…GYDRLRRPGC (108 aa)). The tract at residues 181–299 (VCNQECLCSA…AKTSRPDKPF (119 aa)) is required for interaction with TESK1. Required for colocalization with TESK1 at vesicular spots in the cytoplasm and inhibition of TESK1 kinase activity, resulting in inhibition of cell spreading.

It belongs to the sprouty family. As to quaternary structure, interacts (via C-terminus) with TESK1 (via both C- and N-termini); the interaction inhibits TESK1 kinase activity. Interacts with RAF1. Interacts with CAV1 (via C-terminus).

It localises to the cytoplasm. It is found in the cell projection. Its subcellular location is the ruffle membrane. Suppresses the insulin receptor and EGFR-transduced MAPK signaling pathway, but does not inhibit MAPK activation by a constitutively active mutant Ras. Probably impairs the formation of GTP-Ras. Inhibits Ras-independent, but not Ras-dependent, activation of RAF1. Represses integrin-mediated cell spreading via inhibition of TESK1-mediated phosphorylation of cofilin. The protein is Protein sprouty homolog 4 (SPRY4) of Homo sapiens (Human).